Consider the following 946-residue polypeptide: Rho GTPase-activating protein 4 (946 aa).

The region spanning 19–317 (TQVKEMRWQL…AVEALDPPGD (299 aa)) is the F-BAR domain. Residues 128–195 (LAQRLSHIAE…REAERQEEKR (68 aa)) are a coiled coil. A compositionally biased stretch (basic and acidic residues) spans 187-196 (EAERQEEKRA). 2 disordered regions span residues 187–220 (EAERQEEKRAGRSVPTTTAGATEAGPLRKSSLKK) and 402–435 (LDSFQTSPSTESLKSTSSDPGSRQAGRRRGQQQE). 2 stretches are compositionally biased toward low complexity: residues 202-211 (TTTAGATEAG) and 407-419 (TSPSTESLKSTSS). The Rho-GAP domain maps to 507–695 (GDMEKFIQSS…TLIVQPDRVF (189 aa)). The SH3 domain occupies 746–805 (EGVVEAVACFAYTGRTAQELSFRRGDVLRLHERASSDWWRGEHNGMRGLIPHKYITLPAG). Phosphoserine is present on residues serine 860, serine 901, and serine 906. The interval 885–946 (KTSVRQGLGP…QGLDTTPKPH (62 aa)) is disordered. Positions 901-910 (SPGPRSPKAP) are enriched in pro residues. Over residues 924–934 (GPGAPASPSAS) the composition is skewed to low complexity.

In terms of assembly, interacts with NCKAP1L. In terms of tissue distribution, predominantly in hematopoietic cells (spleen, thymus and leukocytes); low levels in placenta, lung and various fetal tissues.

Its subcellular location is the cytoplasm. Its function is as follows. Inhibitory effect on stress fiber organization. May down-regulate Rho-like GTPase in hematopoietic cells. This Homo sapiens (Human) protein is Rho GTPase-activating protein 4.